A 1694-amino-acid chain; its full sequence is Methyltransferase/helicase/RNA-directed RNA polymerase (1694 aa).

Residues Lys-194 to Leu-444 enclose the Alphavirus-like MT domain. In terms of domain architecture, (+)RNA virus helicase ATP-binding spans Asp-829–Arg-983. The region spanning Ser-984–Glu-1145 is the (+)RNA virus helicase C-terminal domain. The 117-residue stretch at Asn-1442 to Leu-1558 folds into the RdRp catalytic domain.

The protein belongs to the ssRNA positive-strand viruses RNA-directed RNA polymerase family.

It catalyses the reaction ATP + H2O = ADP + phosphate + H(+). The catalysed reaction is RNA(n) + a ribonucleoside 5'-triphosphate = RNA(n+1) + diphosphate. RNA-dependent RNA polymerase replicates the viral genome. The sequence is that of Methyltransferase/helicase/RNA-directed RNA polymerase from Rubus idaeus (Raspberry).